Here is a 162-residue protein sequence, read N- to C-terminus: Succinate dehydrogenase assembly factor 2-A, mitochondrial (162 aa).

A mitochondrion-targeting transit peptide spans 1–23 (MLRQLRLTMDISGWIFLPWRRSM).

This sequence belongs to the SDHAF2 family. As to quaternary structure, interacts with the flavoprotein subunit within the SDH catalytic dimer.

It localises to the mitochondrion matrix. Functionally, plays an essential role in the assembly of succinate dehydrogenase (SDH), an enzyme complex (also referred to as respiratory complex II) that is a component of both the tricarboxylic acid (TCA) cycle and the mitochondrial electron transport chain, and which couples the oxidation of succinate to fumarate with the reduction of ubiquinone (coenzyme Q) to ubiquinol. Required for flavinylation (covalent attachment of FAD) of the flavoprotein subunit of the SDH catalytic dimer. This is Succinate dehydrogenase assembly factor 2-A, mitochondrial from Drosophila erecta (Fruit fly).